The following is a 414-amino-acid chain: Protein PBN1 (414 aa).

Residues 1–390 (MSVQTIQSES…INLPKLDSSD (390 aa)) are Lumenal-facing. N-linked (GlcNAc...) asparagine glycans are attached at residues N44, N95, N169, and N375. The helical transmembrane segment at 391 to 410 (NLCIQLFTLGLVLFSVLYLI) threads the bilayer. Topologically, residues 411–414 (RKLF) are cytoplasmic.

This sequence belongs to the PIGX family.

It localises to the endoplasmic reticulum membrane. The protein operates within glycolipid biosynthesis; glycosylphosphatidylinositol-anchor biosynthesis. Required for proper folding and/or the stability of a subset of proteins in the endoplasmic reticulum. Component of glycosylphosphatidylinositol-mannosyltransferase 1 which transfers the first of the 4 mannoses in the GPI-anchor precursors during GPI-anchor biosynthesis. Probably acts by stabilizing the mannosyltransferase GPI14. The chain is Protein PBN1 (PBN1) from Kluyveromyces lactis (strain ATCC 8585 / CBS 2359 / DSM 70799 / NBRC 1267 / NRRL Y-1140 / WM37) (Yeast).